We begin with the raw amino-acid sequence, 253 residues long: Triosephosphate isomerase, cytosolic (253 aa).

Substrate contacts are provided by asparagine 10 and lysine 12. The active-site Electrophile is histidine 96. Catalysis depends on glutamate 166, which acts as the Proton acceptor.

It belongs to the triosephosphate isomerase family. As to quaternary structure, homodimer.

The protein localises to the cytoplasm. It carries out the reaction D-glyceraldehyde 3-phosphate = dihydroxyacetone phosphate. It functions in the pathway carbohydrate biosynthesis; gluconeogenesis. It participates in carbohydrate degradation; glycolysis; D-glyceraldehyde 3-phosphate from glycerone phosphate: step 1/1. The chain is Triosephosphate isomerase, cytosolic from Coptis japonica (Japanese goldthread).